A 231-amino-acid chain; its full sequence is Large ribosomal subunit protein uL1 (231 aa).

This sequence belongs to the universal ribosomal protein uL1 family. As to quaternary structure, part of the 50S ribosomal subunit.

Its function is as follows. Binds directly to 23S rRNA. The L1 stalk is quite mobile in the ribosome, and is involved in E site tRNA release. Protein L1 is also a translational repressor protein, it controls the translation of the L11 operon by binding to its mRNA. The sequence is that of Large ribosomal subunit protein uL1 from Moorella thermoacetica (strain ATCC 39073 / JCM 9320).